The following is a 219-amino-acid chain: Inner membrane protein YghB (219 aa).

Over 1–17 (MAVIQDIIAALWQHDFA) the chain is Cytoplasmic. A helical membrane pass occupies residues 18-38 (ALANPHVVSVVYFVMFATLFL). Residues 39–67 (ENGLLPASFLPGDSLLLLAGALIAQDVMH) are Periplasmic-facing. Residues 68 to 88 (FLPTIGILTAAASLGCWLSYI) form a helical membrane-spanning segment. The Cytoplasmic portion of the chain corresponds to 89–160 (QGRWLGNTRT…RRFQFFNWLS (72 aa)). A helical membrane pass occupies residues 161 to 181 (GLLWVTVVTSFGYALSMIPFV). The Periplasmic portion of the chain corresponds to 182–191 (KRHEDQVMTF). Residues 192 to 212 (LMILPVALLVAGLLGTLVVVI) traverse the membrane as a helical segment. The Cytoplasmic portion of the chain corresponds to 213–219 (KKKYCNA).

This sequence belongs to the DedA family.

It is found in the cell inner membrane. In Salmonella typhimurium (strain LT2 / SGSC1412 / ATCC 700720), this protein is Inner membrane protein YghB (yghB).